The following is a 76-amino-acid chain: Small ribosomal subunit protein eS17 (76 aa).

It belongs to the eukaryotic ribosomal protein eS17 family.

In Metallosphaera sedula (strain ATCC 51363 / DSM 5348 / JCM 9185 / NBRC 15509 / TH2), this protein is Small ribosomal subunit protein eS17.